Consider the following 155-residue polypeptide: Endoribonuclease YbeY (155 aa).

Zn(2+)-binding residues include His114, His118, and His124.

Belongs to the endoribonuclease YbeY family. Requires Zn(2+) as cofactor.

The protein localises to the cytoplasm. Its function is as follows. Single strand-specific metallo-endoribonuclease involved in late-stage 70S ribosome quality control and in maturation of the 3' terminus of the 16S rRNA. The polypeptide is Endoribonuclease YbeY (Baumannia cicadellinicola subsp. Homalodisca coagulata).